The chain runs to 286 residues: Shikimate dehydrogenase (NADP(+)) (286 aa).

Residues 20–22 and Ser-67 each bind shikimate; that span reads SLS. Lys-71 acts as the Proton acceptor in catalysis. The shikimate site is built by Asn-92 and Asp-107. NADP(+) is bound by residues 131–135 and Ala-230; that span reads GGGGA. Tyr-232 lines the shikimate pocket. Gly-253 contributes to the NADP(+) binding site.

The protein belongs to the shikimate dehydrogenase family. Homodimer.

The enzyme catalyses shikimate + NADP(+) = 3-dehydroshikimate + NADPH + H(+). The protein operates within metabolic intermediate biosynthesis; chorismate biosynthesis; chorismate from D-erythrose 4-phosphate and phosphoenolpyruvate: step 4/7. Involved in the biosynthesis of the chorismate, which leads to the biosynthesis of aromatic amino acids. Catalyzes the reversible NADPH linked reduction of 3-dehydroshikimate (DHSA) to yield shikimate (SA). The protein is Shikimate dehydrogenase (NADP(+)) of Lactococcus lactis subsp. cremoris (strain SK11).